Here is a 63-residue protein sequence, read N- to C-terminus: Large ribosomal subunit protein bL28 (63 aa).

Belongs to the bacterial ribosomal protein bL28 family.

The sequence is that of Large ribosomal subunit protein bL28 from Hydrogenobaculum sp. (strain Y04AAS1).